The chain runs to 245 residues: Octopine transport system permease protein OccM (245 aa).

The next 5 helical transmembrane spans lie at 12-32 (FIALLAGIPLALKLAVFSIAV), 57-77 (FYIFAFRGTPLLVQIYIIYYG), 96-116 (AYWCALGALALNTAAYSAEIM), 163-183 (VLMVKSTSLASTITLMEITGI), and 199-219 (ACAGAIYLTMNFIAARLFALI). Positions 19-216 (IPLALKLAVF…TMNFIAARLF (198 aa)) constitute an ABC transmembrane type-1 domain.

The protein belongs to the binding-protein-dependent transport system permease family. HisMQ subfamily.

Its subcellular location is the cell inner membrane. In terms of biological role, component of the octopine active transport system probably consisting of four subunits: Q, M, P and T. This chain is Octopine transport system permease protein OccM (occM), found in Rhizobium meliloti (Ensifer meliloti).